Reading from the N-terminus, the 186-residue chain is Thymidine kinase (186 aa).

8 to 15 lines the ATP pocket; that stretch reads GPMYSGKT. Catalysis depends on glutamate 86, which acts as the Proton acceptor. Residue phenylalanine 118 coordinates substrate. Residues cysteine 143 and cysteine 146 each contribute to the Zn(2+) site. 162 to 166 contributes to the substrate binding site; it reads IIEIG. Zn(2+)-binding residues include cysteine 175 and cysteine 178.

The protein belongs to the thymidine kinase family.

The catalysed reaction is thymidine + ATP = dTMP + ADP + H(+). The protein is Thymidine kinase (TK) of Choristoneura fumiferana (Spruce budworm moth).